The sequence spans 348 residues: Ileal sodium/bile acid cotransporter (348 aa).

Residues 1-28 (MDNSSICNPNATICEGDSCIAPESNFNA) lie on the Extracellular side of the membrane. N-linked (GlcNAc...) asparagine glycans are attached at residues Asn-3 and Asn-10. The helical transmembrane segment at 29–49 (ILSVVMSTVLTILLALVMFSM) threads the bilayer. The Cytoplasmic segment spans residues 50-81 (GCNVELHKFLGHLRRPWGIVVGFLCQFGIMPL). Residues 82–102 (TGFVLSVAFGILPVQAVVVLI) traverse the membrane as a helical segment. The Extracellular portion of the chain corresponds to 103-126 (QGCCPGGTASNILAYWVDGDMDLS). A helical transmembrane segment spans residues 127-147 (VSMTTCSTLLALGMMPLCLFI). The Cytoplasmic portion of the chain corresponds to 148 to 157 (YTKMWVDSGT). The chain crosses the membrane as a helical span at residues 158–178 (IVIPYDSIGTSLVALVIPVSI). At 179 to 195 (GMYVNHKWPQKAKIILK) the chain is on the extracellular side. A helical transmembrane segment spans residues 196–216 (IGSIAGAILIVLIAVVGGILY). Topologically, residues 217–224 (QSAWTIEP) are cytoplasmic. The helical transmembrane segment at 225 to 245 (KLWIIGTIYPIAGYGLGFFLA) threads the bilayer. The Extracellular portion of the chain corresponds to 246–284 (RIAGQPWYRCRTVALETGLQNTQLCSTIVQLSFSPEDLN). Residues 285 to 305 (LVFTFPLIYSIFQIAFAAILL) form a helical membrane-spanning segment. Residues 306–348 (GAYVAYKKCHGKNNTELQEKTDNEMEPRSSFQETNKGFQPDEK) lie on the Cytoplasmic side of the membrane. Residues 322–332 (LQEKTDNEMEP) are compositionally biased toward basic and acidic residues. Positions 322–348 (LQEKTDNEMEPRSSFQETNKGFQPDEK) are disordered. Residue Ser-335 is modified to Phosphoserine.

Belongs to the bile acid:sodium symporter (BASS) (TC 2.A.28) family. Monomer and homodimer. Mainly expressed in ileum and kidney, lower expression in jejunum.

It localises to the membrane. It catalyses the reaction taurocholate(out) + 2 Na(+)(out) = taurocholate(in) + 2 Na(+)(in). The catalysed reaction is cholate(out) + 2 Na(+)(out) = cholate(in) + 2 Na(+)(in). The enzyme catalyses taurochenodeoxycholate(out) + 2 Na(+)(out) = taurochenodeoxycholate(in) + 2 Na(+)(in). It carries out the reaction tauroursodeoxycholate(out) + 2 Na(+)(out) = tauroursodeoxycholate(in) + 2 Na(+)(in). It catalyses the reaction glycocholate(out) + 2 Na(+)(out) = glycocholate(in) + 2 Na(+)(in). The catalysed reaction is tauronorcholate(out) + 2 Na(+)(out) = tauronorcholate(in) + 2 Na(+)(in). The enzyme catalyses tauroallocholate(out) + 2 Na(+)(out) = tauroallocholate(in) + 2 Na(+)(in). It carries out the reaction taurodeoxycholate(out) + 2 Na(+)(out) = taurodeoxycholate(in) + 2 Na(+)(in). It catalyses the reaction tauro-beta-muricholate(out) + 2 Na(+)(out) = tauro-beta-muricholate(in) + 2 Na(+)(in). Plays a critical role in the sodium-dependent reabsorption of bile acids from the lumen of the small intestine. Transports various bile acids, unconjugated or conjugated, such as cholate and taurocholate. Also responsible for bile acid transport in the renal proximal tubules, a salvage mechanism that helps conserve bile acids. Works collaboratively with the Na(+)-taurocholate cotransporting polypeptide (NTCP), the organic solute transporter (OST), and the bile salt export pump (BSEP), to ensure efficacious biological recycling of bile acids during enterohepatic circulation. This Cricetulus griseus (Chinese hamster) protein is Ileal sodium/bile acid cotransporter (SLC10A2).